The primary structure comprises 963 residues: VPS35 endosomal protein-sorting factor-like (963 aa).

The disordered stretch occupies residues 43–112 (SKTKKVSRKG…DKDENSFVGP (70 aa)). The segment covering 51–72 (KGSTSSTSSSSSSSVIDPLSSV) has biased composition (low complexity). Phosphoserine is present on S265. Residues 699–719 (AFVRACVAYCFITIPSLVGIF) form a helical membrane-spanning segment.

The protein belongs to the VPS35L family. Component of the heterotrimeric retriever complex formed by VPS26C, VPS29 and VPS35L. Interacts with VPS29. Interacts with COMMD1, CCDC93 and CCDC22; associates with the CCC (COMMD/CCDC22/CCDC93) complex which contains at least COMMD1 (and possibly other COMM domain-containing proteins), CCDC22 and CCDC93. Interacts with WASHC1, WASHC2A and WASHC2C. Interacts with SNX17 and SNX31.

Its subcellular location is the membrane. It is found in the endosome. In terms of biological role, acts as a component of the retriever complex. The retriever complex is a heterotrimeric complex related to retromer cargo-selective complex (CSC) and essential for retromer-independent retrieval and recycling of numerous cargos such as integrin alpha-5/beta-1 (ITGA5:ITGB1). The recruitment of the retriever complex to the endosomal membrane involves CCC and WASH complexes. In the endosomes, drives the retrieval and recycling of NxxY-motif-containing cargo proteins by coupling to SNX17, a cargo essential for the homeostatic maintenance of numerous cell surface proteins associated with processes that include cell migration, cell adhesion, nutrient supply and cell signaling. Involved in copper-dependent ATP7A trafficking between the trans-Golgi network and vesicles in the cell periphery; the function is proposed to depend on its association with the CCC complex and cooperation with the WASH complex on early endosomes. Seems not to be required for CCC complex stability. The polypeptide is VPS35 endosomal protein-sorting factor-like (Mus musculus (Mouse)).